Consider the following 878-residue polypeptide: Phosphoenolpyruvate carboxylase (878 aa).

Residues histidine 140 and lysine 545 contribute to the active site.

It belongs to the PEPCase type 1 family. Mg(2+) is required as a cofactor.

The catalysed reaction is oxaloacetate + phosphate = phosphoenolpyruvate + hydrogencarbonate. Forms oxaloacetate, a four-carbon dicarboxylic acid source for the tricarboxylic acid cycle. This chain is Phosphoenolpyruvate carboxylase, found in Pseudomonas syringae pv. syringae (strain B728a).